The sequence spans 351 residues: 1-acylglycerol-3-phosphate O-acyltransferase ABHD5 (351 aa).

The 106-residue stretch at 79-184 folds into the AB hydrolase-1 domain; it reads PLVLLHGFGG…LILVEPWGFP (106 aa). S124 carries the post-translational modification Phosphoserine. The short motif at 329 to 334 is the HXXXXD motif element; it reads HYVYAD.

It belongs to the peptidase S33 family. ABHD4/ABHD5 subfamily. As to quaternary structure, interacts with ADRP and PLIN. Interacts with PNPLA2. Interacts with PLIN5; promotes interaction with PNPLA2.

It localises to the cytoplasm. It is found in the lipid droplet. It carries out the reaction a 1-acyl-sn-glycero-3-phosphate + an acyl-CoA = a 1,2-diacyl-sn-glycero-3-phosphate + CoA. The enzyme catalyses 1-(9Z-octadecenoyl)-sn-glycero-3-phosphate + (9Z)-octadecenoyl-CoA = 1,2-di-(9Z-octadecenoyl)-sn-glycero-3-phosphate + CoA. It catalyses the reaction 1-(9Z-octadecenoyl)-sn-glycero-3-phosphate + hexadecanoyl-CoA = 1-(9Z)-octadecenoyl-2-hexadecanoyl-sn-glycero-3-phosphate + CoA. The catalysed reaction is 1-(9Z-octadecenoyl)-sn-glycero-3-phosphate + octadecanoyl-CoA = 1-(9Z-octadecenoyl)-2-octadecanoyl-sn-glycero-3-phosphate + CoA. It carries out the reaction 1-(9Z-octadecenoyl)-sn-glycero-3-phosphate + (5Z,8Z,11Z,14Z)-eicosatetraenoyl-CoA = 1-(9Z)-octadecenoyl-2-(5Z,8Z,11Z,14Z)-eicosatetraenoyl-sn-glycero-3-phosphate + CoA. The enzyme catalyses eicosanoyl-CoA + 1-(9Z-octadecenoyl)-sn-glycero-3-phosphate = 1-(9Z)-octadecenoyl-2-eicosanoyl-sn-glycero-3-phosphate + CoA. It catalyses the reaction 1-hexadecanoyl-sn-glycero-3-phosphate + (9Z)-octadecenoyl-CoA = 1-hexadecanoyl-2-(9Z-octadecenoyl)-sn-glycero-3-phosphate + CoA. The catalysed reaction is 1-octadecanoyl-sn-glycero-3-phosphate + (9Z)-octadecenoyl-CoA = 1-octadecanoyl-2-(9Z-octadecenoyl)-sn-glycero-3-phosphate + CoA. It carries out the reaction 1-(5Z,8Z,11Z,14Z-eicosatetraenoyl)-sn-glycero-3-phosphate + (9Z)-octadecenoyl-CoA = 1-(5Z,8Z,11Z,14Z)-eicosatetraenoyl-2-(9Z)-octadecenoyl-sn-glycero-3-phosphate + CoA. With respect to regulation, acyltransferase activity is inhibited by detergents such as Triton X-100 and 3-[(3-cholamidopropyl)dimethylammonio]-1-propanesulfonate (CHAPS). Acyltransferase activity is inhibited by the presence of magnesium and calcium. Functionally, coenzyme A-dependent lysophosphatidic acid acyltransferase that catalyzes the transfer of an acyl group on a lysophosphatidic acid. Functions preferentially with 1-oleoyl-lysophosphatidic acid followed by 1-palmitoyl-lysophosphatidic acid, 1-stearoyl-lysophosphatidic acid and 1-arachidonoyl-lysophosphatidic acid as lipid acceptor. Functions preferentially with arachidonoyl-CoA followed by oleoyl-CoA as acyl group donors. Functions in phosphatidic acid biosynthesis. May regulate the cellular storage of triacylglycerol through activation of the phospholipase PNPLA2. Involved in keratinocyte differentiation. Regulates lipid droplet fusion. The polypeptide is 1-acylglycerol-3-phosphate O-acyltransferase ABHD5 (Rattus norvegicus (Rat)).